A 371-amino-acid polypeptide reads, in one-letter code: Bifunctional enzyme IspD/IspF (371 aa).

The segment at 1–210 is 2-C-methyl-D-erythritol 4-phosphate cytidylyltransferase; the sequence is MSEISLIMLA…LDLPTPSFEI (210 aa). A 2-C-methyl-D-erythritol 2,4-cyclodiphosphate synthase region spans residues 211–371; the sequence is FTGNGFDVHE…NLKYFDWTRL (161 aa). A divalent metal cation-binding residues include Asp217 and His219. Residues 217–219 and 243–244 contribute to the 4-CDP-2-C-methyl-D-erythritol 2-phosphate site; these read DVH and HS. His251 lines the a divalent metal cation pocket. 4-CDP-2-C-methyl-D-erythritol 2-phosphate is bound by residues 265–267, 270–274, 341–344, Phe348, and Arg351; these read DIG, YPDTD, and TTTE.

The protein in the N-terminal section; belongs to the IspD/TarI cytidylyltransferase family. IspD subfamily. This sequence in the C-terminal section; belongs to the IspF family. A divalent metal cation is required as a cofactor.

It catalyses the reaction 2-C-methyl-D-erythritol 4-phosphate + CTP + H(+) = 4-CDP-2-C-methyl-D-erythritol + diphosphate. The catalysed reaction is 4-CDP-2-C-methyl-D-erythritol 2-phosphate = 2-C-methyl-D-erythritol 2,4-cyclic diphosphate + CMP. The protein operates within isoprenoid biosynthesis; isopentenyl diphosphate biosynthesis via DXP pathway; isopentenyl diphosphate from 1-deoxy-D-xylulose 5-phosphate: step 2/6. It participates in isoprenoid biosynthesis; isopentenyl diphosphate biosynthesis via DXP pathway; isopentenyl diphosphate from 1-deoxy-D-xylulose 5-phosphate: step 4/6. In terms of biological role, bifunctional enzyme that catalyzes the formation of 4-diphosphocytidyl-2-C-methyl-D-erythritol from CTP and 2-C-methyl-D-erythritol 4-phosphate (MEP) (IspD), and catalyzes the conversion of 4-diphosphocytidyl-2-C-methyl-D-erythritol 2-phosphate (CDP-ME2P) to 2-C-methyl-D-erythritol 2,4-cyclodiphosphate (ME-CPP) with a corresponding release of cytidine 5-monophosphate (CMP) (IspF). The chain is Bifunctional enzyme IspD/IspF from Campylobacter jejuni subsp. jejuni serotype O:6 (strain 81116 / NCTC 11828).